Consider the following 56-residue polypeptide: Serine protease inhibitor Kazal-type 1 (56 aa).

Residues 3–56 (PQREATCTSEVSGCPKIYNPVCGTDGITYSNECVLCSENKKRQTPVLIQKSGPC) form the Kazal-like domain. 3 disulfide bridges follow: C9/C38, C16/C35, and C24/C56.

The protein resides in the secreted. Serine protease inhibitor which exhibits anti-trypsin activity. In the pancreas, protects against trypsin-catalyzed premature activation of zymogens. In terms of biological role, in the male reproductive tract, binds to sperm heads where it modulates sperm capacitance by inhibiting calcium uptake and nitrogen oxide (NO) production. This is Serine protease inhibitor Kazal-type 1 (SPINK1) from Sus scrofa (Pig).